Here is a 447-residue protein sequence, read N- to C-terminus: UDP-N-acetylmuramoylalanine--D-glutamate ligase (447 aa).

Position 130–136 (130–136) interacts with ATP; sequence GTSGKTT.

It belongs to the MurCDEF family.

The protein localises to the cytoplasm. It catalyses the reaction UDP-N-acetyl-alpha-D-muramoyl-L-alanine + D-glutamate + ATP = UDP-N-acetyl-alpha-D-muramoyl-L-alanyl-D-glutamate + ADP + phosphate + H(+). It functions in the pathway cell wall biogenesis; peptidoglycan biosynthesis. Its function is as follows. Cell wall formation. Catalyzes the addition of glutamate to the nucleotide precursor UDP-N-acetylmuramoyl-L-alanine (UMA). In Oleidesulfovibrio alaskensis (strain ATCC BAA-1058 / DSM 17464 / G20) (Desulfovibrio alaskensis), this protein is UDP-N-acetylmuramoylalanine--D-glutamate ligase.